The chain runs to 500 residues: Cytochrome P450 2D26 (500 aa).

A Phosphoserine modification is found at serine 249. Residue cysteine 446 participates in heme binding.

The protein belongs to the cytochrome P450 family. Heme serves as cofactor.

Its subcellular location is the endoplasmic reticulum membrane. It is found in the microsome membrane. The enzyme catalyses an organic molecule + reduced [NADPH--hemoprotein reductase] + O2 = an alcohol + oxidized [NADPH--hemoprotein reductase] + H2O + H(+). Cytochromes P450 are a group of heme-thiolate monooxygenases. In liver microsomes, this enzyme is involved in an NADPH-dependent electron transport pathway. It oxidizes a variety of structurally unrelated compounds, including steroids, fatty acids, and xenobiotics. The protein is Cytochrome P450 2D26 of Mus musculus (Mouse).